The primary structure comprises 317 residues: Adenine deaminase (317 aa).

Residues H14, H16, and H194 each contribute to the Zn(2+) site. The active-site Proton donor is E197. D275 is a Zn(2+) binding site. D276 is a binding site for substrate.

This sequence belongs to the metallo-dependent hydrolases superfamily. Adenosine and AMP deaminases family. Adenine deaminase type 2 subfamily. The cofactor is Zn(2+).

It carries out the reaction adenine + H2O + H(+) = hypoxanthine + NH4(+). Catalyzes the hydrolytic deamination of adenine to hypoxanthine. Plays an important role in the purine salvage pathway and in nitrogen catabolism. The protein is Adenine deaminase of Pseudomonas fluorescens (strain Pf0-1).